We begin with the raw amino-acid sequence, 193 residues long: NAD(P)H-quinone oxidoreductase subunit I (193 aa).

4Fe-4S ferredoxin-type domains are found at residues 56 to 85 (GRIHFEFDKCIACEVCVRVCPINLPVVDWE) and 96 to 125 (KHYSIDFGVCIFCGNCVEYCPTNCLSMTEE). Residues C65, C68, C71, C75, C105, C108, C111, and C115 each coordinate [4Fe-4S] cluster. The segment at 174–193 (NLPKGSQRAGQHPEDLVKAE) is disordered. Residues 184 to 193 (QHPEDLVKAE) show a composition bias toward basic and acidic residues.

The protein belongs to the complex I 23 kDa subunit family. NDH-1 is composed of at least 11 different subunits. [4Fe-4S] cluster is required as a cofactor.

It is found in the cellular thylakoid membrane. It catalyses the reaction a plastoquinone + NADH + (n+1) H(+)(in) = a plastoquinol + NAD(+) + n H(+)(out). It carries out the reaction a plastoquinone + NADPH + (n+1) H(+)(in) = a plastoquinol + NADP(+) + n H(+)(out). Its function is as follows. NDH-1 shuttles electrons from an unknown electron donor, via FMN and iron-sulfur (Fe-S) centers, to quinones in the respiratory and/or the photosynthetic chain. The immediate electron acceptor for the enzyme in this species is believed to be plastoquinone. Couples the redox reaction to proton translocation, and thus conserves the redox energy in a proton gradient. The polypeptide is NAD(P)H-quinone oxidoreductase subunit I (Synechocystis sp. (strain ATCC 27184 / PCC 6803 / Kazusa)).